The primary structure comprises 711 residues: MKFFASCAKGLEYLLADELLALGASKATATISGVNVEGELRDAQRAVLWSRLASRVLWPLSEFDCPDEDALYAGVAELPWDAHLSVGHTLSVDAHVSGTAITHARYAAQRIKDAVVDTMRRQGLERPSVDVESPDLRLNLSLRKGRATISVDLGGGPLHRRGWRMAQNEAPLKENLAAAVLMRGGWPRAYADGGGLLDPMCGSGTLLIEGALMAADVAPGLQRYGSDLPSRWRGFDRNGWQQLVSEARERDSVGRAALKQVIHGSDMDPHAIRAAKENAQVAGVAEAIWFGVCEVGELQTPPQATGVVVCNPPYDERLAADAALYRRLGDTLQCAVPQWRASLLCGNAELAYATGLRAGKKYQLFNGAIECALIVCDPIAVPRRTPLAAPTALSEGAQMVANRLRKNLQKFKKWRAREGVECFRAYDADLPEYSAAIDVYQQADGDRRIFLHVQEYAAPATIPEADVRRRLNELLAAAREVFEVPAERVALKSRERGKGGSKYGRFEQRNEIVHVREHGALLRVNLFDYLDTGLFLDHRPLRGTMAQQSRGRRFLNLFCYTGVASVEAAVAGAASTTSVDLSGTYLQWCADNLALNGLAGSKHKLVQADALAWLEAERAHFDVIFCDPPTFSNSARAEDFDIQRAHVRLLRAAVARLAPGGVLYFSNNFRRFKLDEEGVAEFAQCEDISPRTIDPDFERHARIHRAWRLTA.

The THUMP domain maps to 42-153 (DAQRAVLWSR…KGRATISVDL (112 aa)).

This sequence belongs to the methyltransferase superfamily. RlmKL family.

It localises to the cytoplasm. It catalyses the reaction guanosine(2445) in 23S rRNA + S-adenosyl-L-methionine = N(2)-methylguanosine(2445) in 23S rRNA + S-adenosyl-L-homocysteine + H(+). The catalysed reaction is guanosine(2069) in 23S rRNA + S-adenosyl-L-methionine = N(2)-methylguanosine(2069) in 23S rRNA + S-adenosyl-L-homocysteine + H(+). In terms of biological role, specifically methylates the guanine in position 2445 (m2G2445) and the guanine in position 2069 (m7G2069) of 23S rRNA. This is Ribosomal RNA large subunit methyltransferase K/L from Xanthomonas oryzae pv. oryzae (strain MAFF 311018).